The sequence spans 504 residues: Maturase K (504 aa).

It belongs to the intron maturase 2 family. MatK subfamily.

The protein resides in the plastid. It is found in the chloroplast. In terms of biological role, usually encoded in the trnK tRNA gene intron. Probably assists in splicing its own and other chloroplast group II introns. This chain is Maturase K, found in Quercus robur (English oak).